Reading from the N-terminus, the 507-residue chain is Transcription factor CP2 (507 aa).

The Grh/CP2 DB domain occupies 61–300 (ENKILPFQYV…SPGFNSSHNS (240 aa)). A DNA-binding region spans residues 133–395 (EHQQLEGWRW…LFNALKGRMV (263 aa)). Disordered regions lie at residues 240–268 (PKGA…YQPS) and 296–316 (SSHN…QPEP). The span at 241-265 (KGADRKQKTDREKMEKRTPQEKEKY) shows a compositional bias: basic and acidic residues.

This sequence belongs to the grh/CP2 family. CP2 subfamily. As to quaternary structure, component of the SSP (stage selector protein) complex, which appears to be a heteromer of TFCP2 and 2 copies of NFE4.

The protein resides in the nucleus. In terms of biological role, may function as a transcription factor. The sequence is that of Transcription factor CP2 (tfcp2) from Xenopus tropicalis (Western clawed frog).